A 659-amino-acid chain; its full sequence is 4-alpha-glucanotransferase (659 aa).

Glutamate 123 functions as the Nucleophile in the catalytic mechanism. The active-site Proton donor is the aspartate 214.

This sequence belongs to the glycosyl hydrolase 57 family. Homodimer.

It catalyses the reaction Transfers a segment of a (1-&gt;4)-alpha-D-glucan to a new position in an acceptor, which may be glucose or a (1-&gt;4)-alpha-D-glucan.. Its activity is regulated as follows. Inhibited by p-chloromercuribenzoic acid, monoiodoacetic acid, mercury and nickel ions. Its function is as follows. Catalyzes the transglycosylation of maltooligosaccharides, yielding maltooligosaccharides of various lengths and glucose. Maltose and glucose can be used as acceptors in the transfer reaction. This Thermococcus litoralis (strain ATCC 51850 / DSM 5473 / JCM 8560 / NS-C) protein is 4-alpha-glucanotransferase (jgt).